Here is a 131-residue protein sequence, read N- to C-terminus: Binder of sperm protein homolog 2 (131 aa).

An N-terminal signal peptide occupies residues 1 to 22; the sequence is MEVMSHLVHWVFLAVYMYELNA. Fibronectin type-II domains follow at residues 35 to 79 and 80 to 128; these read ISTD…YCTA and QDPP…QCSP. 4 disulfides stabilise this stretch: C40-C64, C54-C77, C85-C111, and C99-C126.

This sequence belongs to the seminal plasma protein family. Epididymis.

Its subcellular location is the secreted. In terms of biological role, binds sperm in vitro but has no effect on sperm capacitation. Also binds gelatin and heparin, but not chondroitin sulfate B or phospholipid liposomes. This chain is Binder of sperm protein homolog 2, found in Mus musculus (Mouse).